The sequence spans 1279 residues: Talin-A (1279 aa).

The 282-residue stretch at 84-365 (RPQKFKLLDG…GYIEIIMKAR (282 aa)) folds into the FERM domain.

The protein resides in the cytoplasm. It localises to the cytoskeleton. The protein localises to the cell cortex. Functionally, actin-binding protein that may be involved in the control of cell motility and chemotaxis. In Dictyostelium discoideum (Social amoeba), this protein is Talin-A (talA).